Consider the following 262-residue polypeptide: Ubiquitin thioesterase otubain-like (262 aa).

An OTU domain is found at 64–262 (KFIRRTRPDG…PGHYDILYPN (199 aa)). D72 is an active-site residue. C75 (nucleophile) is an active-site residue. I168 contributes to the substrate binding site. H255 is a catalytic residue.

The protein belongs to the peptidase C65 family.

It catalyses the reaction Thiol-dependent hydrolysis of ester, thioester, amide, peptide and isopeptide bonds formed by the C-terminal Gly of ubiquitin (a 76-residue protein attached to proteins as an intracellular targeting signal).. Functionally, possible hydrolase that can remove conjugated ubiquitin from proteins in vitro and may therefore play an important regulatory role at the level of protein turnover by preventing degradation. The sequence is that of Ubiquitin thioesterase otubain-like from Drosophila melanogaster (Fruit fly).